The following is a 216-amino-acid chain: UPF0502 protein Pmen_2627 (216 aa).

Belongs to the UPF0502 family.

The polypeptide is UPF0502 protein Pmen_2627 (Ectopseudomonas mendocina (strain ymp) (Pseudomonas mendocina)).